We begin with the raw amino-acid sequence, 286 residues long: Bifunctional protein FolD (286 aa).

Residues 166–168 (GAS) and Ile-232 each bind NADP(+).

This sequence belongs to the tetrahydrofolate dehydrogenase/cyclohydrolase family. In terms of assembly, homodimer.

The enzyme catalyses (6R)-5,10-methylene-5,6,7,8-tetrahydrofolate + NADP(+) = (6R)-5,10-methenyltetrahydrofolate + NADPH. The catalysed reaction is (6R)-5,10-methenyltetrahydrofolate + H2O = (6R)-10-formyltetrahydrofolate + H(+). It functions in the pathway one-carbon metabolism; tetrahydrofolate interconversion. In terms of biological role, catalyzes the oxidation of 5,10-methylenetetrahydrofolate to 5,10-methenyltetrahydrofolate and then the hydrolysis of 5,10-methenyltetrahydrofolate to 10-formyltetrahydrofolate. This Vibrio campbellii (strain ATCC BAA-1116) protein is Bifunctional protein FolD.